We begin with the raw amino-acid sequence, 155 residues long: Large ribosomal subunit protein uL22 (155 aa).

It belongs to the universal ribosomal protein uL22 family. As to quaternary structure, part of the 50S ribosomal subunit.

In terms of biological role, this protein binds specifically to 23S rRNA. It makes multiple contacts with different domains of the 23S rRNA in the assembled 50S subunit and ribosome. Functionally, the globular domain of the protein is located near the polypeptide exit tunnel on the outside of the subunit, while an extended beta-hairpin is found that lines the wall of the exit tunnel in the center of the 70S ribosome. This chain is Large ribosomal subunit protein uL22, found in Pyrococcus abyssi (strain GE5 / Orsay).